The sequence spans 101 residues: MMLEHELVLSAYLFSIGIYGLITSRNMVRALMCLELILNAVNMNLVTFSDLFDSRQLKGDIFSIFVIAIAAAEAAIGPAIVSSIYRNRRSTRINQSNLLNK.

3 helical membrane-spanning segments follow: residues 2–22 (MLEH…YGLI), 32–52 (MCLE…SDLF), and 61–81 (IFSI…PAIV).

It belongs to the complex I subunit 4L family. As to quaternary structure, NDH is composed of at least 16 different subunits, 5 of which are encoded in the nucleus.

The protein resides in the plastid. It localises to the chloroplast thylakoid membrane. The catalysed reaction is a plastoquinone + NADH + (n+1) H(+)(in) = a plastoquinol + NAD(+) + n H(+)(out). It carries out the reaction a plastoquinone + NADPH + (n+1) H(+)(in) = a plastoquinol + NADP(+) + n H(+)(out). In terms of biological role, NDH shuttles electrons from NAD(P)H:plastoquinone, via FMN and iron-sulfur (Fe-S) centers, to quinones in the photosynthetic chain and possibly in a chloroplast respiratory chain. The immediate electron acceptor for the enzyme in this species is believed to be plastoquinone. Couples the redox reaction to proton translocation, and thus conserves the redox energy in a proton gradient. In Ceratophyllum demersum (Rigid hornwort), this protein is NAD(P)H-quinone oxidoreductase subunit 4L, chloroplastic.